Reading from the N-terminus, the 921-residue chain is Protein translocase subunit SecA (921 aa).

Residues Q87, 105-109 (GEGKT), and D516 each bind ATP. Zn(2+) is bound by residues C905, C907, C916, and H917.

Belongs to the SecA family. As to quaternary structure, monomer and homodimer. Part of the essential Sec protein translocation apparatus which comprises SecA, SecYEG and auxiliary proteins SecDF-YajC and YidC. The cofactor is Zn(2+).

The protein resides in the cell inner membrane. It is found in the cytoplasm. It carries out the reaction ATP + H2O + cellular proteinSide 1 = ADP + phosphate + cellular proteinSide 2.. Functionally, part of the Sec protein translocase complex. Interacts with the SecYEG preprotein conducting channel. Has a central role in coupling the hydrolysis of ATP to the transfer of proteins into and across the cell membrane, serving both as a receptor for the preprotein-SecB complex and as an ATP-driven molecular motor driving the stepwise translocation of polypeptide chains across the membrane. The sequence is that of Protein translocase subunit SecA from Polaromonas sp. (strain JS666 / ATCC BAA-500).